A 332-amino-acid chain; its full sequence is Ketol-acid reductoisomerase (NADP(+)) (332 aa).

A KARI N-terminal Rossmann domain is found at 1–182; the sequence is MAQVWKDAEI…GSARAGLIKT (182 aa). Residues 25–28, Lys-48, Ser-53, and 83–86 each bind NADP(+); these read YGIQ and DMIQ. Residue His-108 is part of the active site. Gly-134 contacts NADP(+). The 147-residue stretch at 183–329 folds into the KARI C-terminal knotted domain; the sequence is TFKEEVETDW…RKMRKMMWPD (147 aa). Mg(2+) contacts are provided by Asp-191, Glu-195, Glu-227, and Glu-231. Ser-252 contacts substrate.

It belongs to the ketol-acid reductoisomerase family. The cofactor is Mg(2+).

The catalysed reaction is (2R)-2,3-dihydroxy-3-methylbutanoate + NADP(+) = (2S)-2-acetolactate + NADPH + H(+). The enzyme catalyses (2R,3R)-2,3-dihydroxy-3-methylpentanoate + NADP(+) = (S)-2-ethyl-2-hydroxy-3-oxobutanoate + NADPH + H(+). It functions in the pathway amino-acid biosynthesis; L-isoleucine biosynthesis; L-isoleucine from 2-oxobutanoate: step 2/4. The protein operates within amino-acid biosynthesis; L-valine biosynthesis; L-valine from pyruvate: step 2/4. Involved in the biosynthesis of branched-chain amino acids (BCAA). Catalyzes an alkyl-migration followed by a ketol-acid reduction of (S)-2-acetolactate (S2AL) to yield (R)-2,3-dihydroxy-isovalerate. In the isomerase reaction, S2AL is rearranged via a Mg-dependent methyl migration to produce 3-hydroxy-3-methyl-2-ketobutyrate (HMKB). In the reductase reaction, this 2-ketoacid undergoes a metal-dependent reduction by NADPH to yield (R)-2,3-dihydroxy-isovalerate. The polypeptide is Ketol-acid reductoisomerase (NADP(+)) (Cenarchaeum symbiosum (strain A)).